The primary structure comprises 760 residues: Catecholate siderophore receptor Fiu (760 aa).

Residues 1–31 form the signal peptide; sequence MENNRNFPARQFHSLTFFAGLCIGITPVAQA. One can recognise a TBDR plug domain in the interval 67 to 175; the sequence is PVADTTRTMT…PTGSINMISK (109 aa). The region spanning 180–760 is the TBDR beta-barrel domain; that stretch reads DSGIDASASI…TFLLTANMHF (581 aa). The short motif at 743-760 is the TonB C-terminal box element; sequence RYHPGEPRTFLLTANMHF.

The protein belongs to the TonB-dependent receptor family.

The protein resides in the cell outer membrane. In terms of biological role, involved in the active transport across the outer membrane of iron complexed with catecholate siderophores such as dihydroxybenzoylserine and dihydroxybenzoate. It derives its energy for transport by interacting with the trans-periplasmic membrane protein TonB. Can also transport catechol-substituted cephalosporins. Receptor for microcins M, H47 and E492. The chain is Catecholate siderophore receptor Fiu (fiu) from Escherichia coli O157:H7.